Reading from the N-terminus, the 128-residue chain is Probable soluble cytochrome b562 2 (128 aa).

Residues 1-22 (MGKTLMALITAALLSTSSLVMA) form the signal peptide. Heme b contacts are provided by Met29 and His124.

Belongs to the cytochrome b562 family. The cofactor is heme b.

The protein resides in the periplasm. In terms of biological role, electron-transport protein of unknown function. The sequence is that of Probable soluble cytochrome b562 2 (cybC2) from Yersinia pestis.